Reading from the N-terminus, the 1347-residue chain is Ubinuclein-2 (1347 aa).

The disordered stretch occupies residues 1 to 134 (MAEPRRVAFI…ETVRLELVLK (134 aa)). Ser13 bears the Phosphoserine mark. Composition is skewed to basic and acidic residues over residues 16–37 (RRRE…EPPR) and 67–79 (SREK…EVSR). Residues 93–110 (PEPPPPFPPLPLQPPPPR) show a composition bias toward pro residues. Over residues 122–134 (PPRETVRLELVLK) the composition is skewed to basic and acidic residues. Thr243 carries the post-translational modification Phosphothreonine. Ser250 carries the post-translational modification Phosphoserine. The interval 250–301 (SDTEEDDITDNQKHKPPKVPKIKEDDIEMKKRKRKEEGEKEKKPRKKVPKQL) is disordered. Thr252 is subject to Phosphothreonine. Residue Lys272 forms a Glycyl lysine isopeptide (Lys-Gly) (interchain with G-Cter in SUMO2) linkage. Phosphoserine is present on residues Ser311, Ser416, Ser419, Ser422, and Ser584. 6 disordered regions span residues 573–597 (LQTD…KRVI), 707–740 (ECSP…AAAS), 815–849 (LATP…DLAH), 880–913 (GLQR…HALG), 981–1006 (RLPL…TVPS), and 1035–1218 (ASPK…SSVV). A compositionally biased stretch (basic and acidic residues) spans 574–584 (QTDEEREKNGS). The span at 721–740 (VASVSGPPTSSSTAAIAAAS) shows a compositional bias: low complexity. Residues 823 to 832 (STQTTHSSSL) are compositionally biased toward polar residues. Residues 880–911 (GLQRSSQIHTSSSSQTHVSSSSQAQIAASSHA) show a composition bias toward low complexity. The segment covering 985-996 (STPSPGNGSQGS) has biased composition (polar residues). The span at 1035-1045 (ASPKLAASPKP) shows a compositional bias: low complexity. A compositionally biased stretch (pro residues) spans 1046–1060 (ATSPKPLPSPKPSAS). Low complexity-rich tracts occupy residues 1061-1070 (PKPSLSAKPS) and 1077-1095 (SKSN…SSPN). An N6-acetyllysine modification is found at Lys1068. Polar residues-rich tracts occupy residues 1101 to 1164 (GSHS…NSLS) and 1174 to 1185 (RGSNLNSSGANR). Ser1123 bears the Phosphoserine mark. N6-acetyllysine is present on Lys1148.

Belongs to the ubinuclein family. In terms of tissue distribution, expressed in several cell lines tested, including primary and transformed cell lines.

The sequence is that of Ubinuclein-2 (UBN2) from Homo sapiens (Human).